Consider the following 602-residue polypeptide: Arp2/3 complex-activating protein rickA (602 aa).

Disordered regions lie at residues 307 to 484 (SSLA…AGPK), 516 to 535 (VEFD…KPVQ), and 555 to 602 (MSDS…SFVK). Residues 318-442 (TPPPPLPGNN…IPPPPPPPMA (125 aa)) are compositionally biased toward pro residues. 2 consecutive WH2 domains span residues 472 to 489 (DTSD…LRKV) and 499 to 516 (SRDL…LKKV). Residues 475–484 (DLMREIAGPK) are compositionally biased toward basic and acidic residues. Positions 537 to 570 (VNKLSGVASILARRVVMEMSDSSGSESDSGNWSD) are central and acidic domains. Residues 555–566 (MSDSSGSESDSG) are compositionally biased toward low complexity. The span at 578–590 (KTLKTKRERRKIL) shows a compositional bias: basic residues. Positions 591-602 (NNRNSQKPSFVK) are enriched in polar residues.

Homodimer.

The protein resides in the cell surface. Recruits and activates the Arp2/3 complex, which in turn leads to actin polymerization, promoting Rickettsia motility during infection. This is Arp2/3 complex-activating protein rickA (rickA) from Rickettsia montanensis.